Here is a 397-residue protein sequence, read N- to C-terminus: MKILVVNCGSSSLKYQLIDMTSEEALAKGLVERIGIEGSILTQKVNGEKYIIEEPMKDHKKAIELVLKALVDKEHGVISDMSEIAAVGHRVVHGGEKYASSVLIDDEVMKALEDCVKLAPLHNPPNIIGINACRELMPKTPMVAVFDTAFHQTLPDYAYMYPLPYELYEQNGIRKYGFHGTSHRYVSSVASDMMGKDLKDLKVITCHLGNGASLCAVKEGKSVETSMGFTPLAGLAMGTRCGDIDPAILLFMERELKMSPDEVDAVINKKSGVLGISGVSSDFRDIEGAAKEGNKRAKLALDVYHYTVRQTIGAYTAVLNGVDAIVFTAGLGENSAASREEILNGLEYLGIKIDAEKNKQRGKQIEISTEDSKVKVFVIPTDEELMIARDTKEITAK.

Asn7 is a binding site for Mg(2+). Lys14 provides a ligand contact to ATP. Position 90 (Arg90) interacts with substrate. Asp147 acts as the Proton donor/acceptor in catalysis. ATP-binding positions include 207-211 (HLGNG), 282-284 (DFR), and 330-334 (GLGEN). Glu383 lines the Mg(2+) pocket.

Belongs to the acetokinase family. As to quaternary structure, homodimer. It depends on Mg(2+) as a cofactor. The cofactor is Mn(2+).

It is found in the cytoplasm. The enzyme catalyses acetate + ATP = acetyl phosphate + ADP. The protein operates within metabolic intermediate biosynthesis; acetyl-CoA biosynthesis; acetyl-CoA from acetate: step 1/2. In terms of biological role, catalyzes the formation of acetyl phosphate from acetate and ATP. Can also catalyze the reverse reaction. The chain is Acetate kinase from Clostridium botulinum (strain Loch Maree / Type A3).